We begin with the raw amino-acid sequence, 612 residues long: Lipoma-preferred partner (612 aa).

Disordered stretches follow at residues 1 to 118 (MSHP…SSLD) and 132 to 219 (ECSS…SSRP). The segment covering 26–40 (THSFGNPSISVSTQQ) has biased composition (polar residues). Low complexity predominate over residues 41 to 53 (PPKKFAPVVAPKP). Lysine 108 bears the N6-acetyllysine mark. Residues serine 116 and serine 151 each carry the phosphoserine modification. Composition is skewed to polar residues over residues 143-158 (QSSTGSTASPPVSTPV) and 171-181 (PLTATKKSTLK). A compositionally biased stretch (pro residues) spans 183-193 (QPAPQAGPIPV). Polar residues predominate over residues 209-219 (SYTTASTSSRP). A phosphotyrosine mark is found at tyrosine 244 and tyrosine 301. A disordered region spans residues 307–387 (YGGRNDSDPT…LGPSSVAPSF (81 aa)). A compositionally biased stretch (polar residues) spans 314 to 323 (DPTYGQQGHP). Lysine 327 participates in a covalent cross-link: Glycyl lysine isopeptide (Lys-Gly) (interchain with G-Cter in SUMO1). The residue at position 333 (threonine 333) is a Phosphothreonine. Serine 375 bears the Phosphoserine mark. LIM zinc-binding domains lie at 414 to 473 (GRCA…INTL), 474 to 534 (EQCN…KFAP), and 535 to 603 (RCSV…RIRV).

This sequence belongs to the zyxin/ajuba family. As to quaternary structure, interacts with VASP, with PDZ domains of SCRIB and with ACTN1/alpha-actinin. As to expression, expressed in a wide variety of tissues but no or very low expression in brain and peripheral leukocytes.

It is found in the nucleus. It localises to the cytoplasm. The protein localises to the cell junction. The protein resides in the cell membrane. Its function is as follows. May play a structural role at sites of cell adhesion in maintaining cell shape and motility. In addition to these structural functions, it may also be implicated in signaling events and activation of gene transcription. May be involved in signal transduction from cell adhesion sites to the nucleus allowing successful integration of signals arising from soluble factors and cell-cell adhesion sites. Also suggested to serve as a scaffold protein upon which distinct protein complexes are assembled in the cytoplasm and in the nucleus. In Homo sapiens (Human), this protein is Lipoma-preferred partner (LPP).